The primary structure comprises 70 residues: Large ribosomal subunit protein bL31 (70 aa).

4 residues coordinate Zn(2+): cysteine 16, cysteine 18, cysteine 37, and cysteine 40.

Belongs to the bacterial ribosomal protein bL31 family. Type A subfamily. Part of the 50S ribosomal subunit. It depends on Zn(2+) as a cofactor.

Its function is as follows. Binds the 23S rRNA. This Shewanella denitrificans (strain OS217 / ATCC BAA-1090 / DSM 15013) protein is Large ribosomal subunit protein bL31.